The primary structure comprises 473 residues: Siroheme synthase (473 aa).

Residues 1-203 (MNYLPIFIDL…GNKEQAINVL (203 aa)) form a precorrin-2 dehydrogenase /sirohydrochlorin ferrochelatase region. NAD(+)-binding positions include 22–23 (EV) and 43–44 (KE). Ser128 is modified (phosphoserine). Residues 215–473 (GEIILVGAGP…KNKFSTLTFI (259 aa)) form a uroporphyrinogen-III C-methyltransferase region. An S-adenosyl-L-methionine-binding site is contributed by Pro224. Asp247 (proton acceptor) is an active-site residue. Lys269 functions as the Proton donor in the catalytic mechanism. S-adenosyl-L-methionine-binding positions include 300–302 (GGD), Ile305, Met382, and Gly411.

This sequence in the N-terminal section; belongs to the precorrin-2 dehydrogenase / sirohydrochlorin ferrochelatase family. It in the C-terminal section; belongs to the precorrin methyltransferase family.

The catalysed reaction is uroporphyrinogen III + 2 S-adenosyl-L-methionine = precorrin-2 + 2 S-adenosyl-L-homocysteine + H(+). It catalyses the reaction precorrin-2 + NAD(+) = sirohydrochlorin + NADH + 2 H(+). It carries out the reaction siroheme + 2 H(+) = sirohydrochlorin + Fe(2+). The protein operates within cofactor biosynthesis; adenosylcobalamin biosynthesis; precorrin-2 from uroporphyrinogen III: step 1/1. Its pathway is cofactor biosynthesis; adenosylcobalamin biosynthesis; sirohydrochlorin from precorrin-2: step 1/1. It functions in the pathway porphyrin-containing compound metabolism; siroheme biosynthesis; precorrin-2 from uroporphyrinogen III: step 1/1. It participates in porphyrin-containing compound metabolism; siroheme biosynthesis; siroheme from sirohydrochlorin: step 1/1. The protein operates within porphyrin-containing compound metabolism; siroheme biosynthesis; sirohydrochlorin from precorrin-2: step 1/1. Functionally, multifunctional enzyme that catalyzes the SAM-dependent methylations of uroporphyrinogen III at position C-2 and C-7 to form precorrin-2 via precorrin-1. Then it catalyzes the NAD-dependent ring dehydrogenation of precorrin-2 to yield sirohydrochlorin. Finally, it catalyzes the ferrochelation of sirohydrochlorin to yield siroheme. This Buchnera aphidicola subsp. Acyrthosiphon pisum (strain APS) (Acyrthosiphon pisum symbiotic bacterium) protein is Siroheme synthase.